A 559-amino-acid chain; its full sequence is Proton-coupled zinc antiporter SLC30A9, mitochondrial (559 aa).

The segment at 58-96 is disordered; that stretch reads SSDQKEDGGSKGTSAASSPEKSMAGLDPSKPEQKSTFPP. A run of 5 helical transmembrane segments spans residues 230–250, 305–325, 333–353, 389–409, and 415–435; these read VVIV…LAWV, GVGI…IGLL, LLWA…TLLV, AAAV…SLTG, and SLGS…LIYT. Residues 453 to 457 carry the LXXLL motif motif; the sequence is LTELL.

Belongs to the cation diffusion facilitator (CDF) transporter (TC 2.A.4) family. SLC30A subfamily.

Its subcellular location is the mitochondrion membrane. It localises to the nucleus. The protein resides in the endoplasmic reticulum. The enzyme catalyses Zn(2+)(in) + 2 H(+)(out) = Zn(2+)(out) + 2 H(+)(in). Mitochondrial proton-coupled zinc ion antiporter mediating the export of zinc from the mitochondria and involved in zinc homeostasis, zinc mobilization as well as mitochondrial morphology and health. In nucleus, may function as a secondary coactivator for nuclear receptors. This chain is Proton-coupled zinc antiporter SLC30A9, mitochondrial (slc30a9), found in Xenopus laevis (African clawed frog).